The primary structure comprises 356 residues: Cyanide hydratase (356 aa).

One can recognise a CN hydrolase domain in the interval 8–287; sequence YKAAAVNAEP…EGLLFVDIDL (280 aa). The active-site Proton acceptor is the Glu-48. Residue Lys-130 is part of the active site. The Nucleophile role is filled by Cys-165.

This sequence belongs to the carbon-nitrogen hydrolase superfamily. Nitrilase family. Oligomer of dimers, forming left-handed helical fibers.

The enzyme catalyses formamide = hydrogen cyanide + H2O. Functionally, catalyzes the hydration of cyanide to formamide. Degradation of cyanide may be important for plant pathogenic fungi in infection of cyanogenic plants. Can also transform some nitriles like 2-cyanopyridine and fumaronitrile. The protein is Cyanide hydratase of Aspergillus niger.